A 202-amino-acid polypeptide reads, in one-letter code: Protein phosphatase inhibitor 2 family member C (202 aa).

Disordered regions lie at residues 1-51 (MSAS…DESS) and 71-118 (PGTS…EQES). Positions 12-17 (KGILKN) are required for binding PPP1CC. Positions 19–35 (SSSGSSVATSGQQSGGT) are enriched in low complexity. A required for binding PPP1CC region spans residues 43–55 (KSQKWDESSILAA). The span at 71–80 (PGTSYMSVQD) shows a compositional bias: polar residues. Over residues 84–112 (DSVRDVEGEDSVRGVEGKEATDASDHSCE) the composition is skewed to basic and acidic residues. A required for binding PPP1CC catalytic center, displacing metal ions and inhibition of PPP1CC catalytic activity region spans residues 144–147 (HYNE). Positions 162–202 (LQSEDNENEETPQGTNEEKTAAEESEEAPLTGGLQTQSCDP) are disordered.

The protein belongs to the protein phosphatase inhibitor 2 family. Detected in sperm (at protein level).

Functionally, functions as a protein phosphatase inhibitor. It inhibits activity of the catalytic subunit of PP1 and weakly inhibits the activity of myosin-associated phosphates. This Homo sapiens (Human) protein is Protein phosphatase inhibitor 2 family member C.